The primary structure comprises 710 residues: Early transcription factor 82 kDa subunit (710 aa).

The protein belongs to the poxviridae VETF large subunit family. In terms of assembly, heterodimer of a 70 kDa and a 82 kDa subunit. Part of the early transcription complex composed of ETF, RAP94/OPG109, and the DNA-directed RNA polymerase.

It localises to the virion. Its function is as follows. Acts with RNA polymerase to initiate transcription from early gene promoters. Is recruited by the RPO-associated protein of 94 kDa RAP94/OPG109 to form the early transcription complex, which also contains the core RNA polymerase. ETF heterodimer binds to early gene promoters. This Bos taurus (Bovine) protein is Early transcription factor 82 kDa subunit (OPG133).